Consider the following 807-residue polypeptide: Protein FAR1-RELATED SEQUENCE 2 (807 aa).

In terms of domain architecture, FAR1 spans 52–138; it reads YFYREYARSV…VKEHNHEICP (87 aa). The region spanning 219 to 315 is the MULE domain; that stretch reads VVLFDTFYVR…CLWSVLSKIS (97 aa). Residues 499–535 form an SWIM-type zinc finger; it reads FFVALNNELLDACCSCHLFEYQGFLCKHAILVLQSAD. Positions 660–680 form a coiled coil; that stretch reads EDATNRSEELRQETEQVSSRA. Residues 788–798 show a composition bias toward polar residues; sequence GSSQFQGSDSS. The tract at residues 788–807 is disordered; that stretch reads GSSQFQGSDSSHPSDHRLSN.

The protein belongs to the FHY3/FAR1 family. Expressed in hypocotyls, rosette and cauline leaves, inflorescences stems, flowers and siliques.

It localises to the nucleus. Putative transcription activator involved in regulating light control of development. This Arabidopsis thaliana (Mouse-ear cress) protein is Protein FAR1-RELATED SEQUENCE 2 (FRS2).